A 283-amino-acid chain; its full sequence is MPAQLIDGNALAKQIRSEAAQRAARLTERGHQPGLAVVLVGEDPASQVYVRNKVKACEDNGFHSSLDRYPADLSEADLLARIDELNRDPRIHGILVQLPLPKHIDSHKVLEAIAPEKDVDGFHVANAGALMTGAPLFRPCTPYGCMKMLESIQYPLRGARAVVVGASNIVGKPMAMLLLQGGATVTICNSKTRDIGAHTRDADVVVAAVGKRNLITADMVKPGAVVIDVGMNRDDHGKLCGDVDFAGVREVAGYITPVPGGVGPMTITMLLINTLEAAERAAG.

NADP(+) is bound by residues 165-167 (GAS) and serine 190.

This sequence belongs to the tetrahydrofolate dehydrogenase/cyclohydrolase family. In terms of assembly, homodimer.

The catalysed reaction is (6R)-5,10-methylene-5,6,7,8-tetrahydrofolate + NADP(+) = (6R)-5,10-methenyltetrahydrofolate + NADPH. It catalyses the reaction (6R)-5,10-methenyltetrahydrofolate + H2O = (6R)-10-formyltetrahydrofolate + H(+). It functions in the pathway one-carbon metabolism; tetrahydrofolate interconversion. Its function is as follows. Catalyzes the oxidation of 5,10-methylenetetrahydrofolate to 5,10-methenyltetrahydrofolate and then the hydrolysis of 5,10-methenyltetrahydrofolate to 10-formyltetrahydrofolate. In Cupriavidus taiwanensis (strain DSM 17343 / BCRC 17206 / CCUG 44338 / CIP 107171 / LMG 19424 / R1) (Ralstonia taiwanensis (strain LMG 19424)), this protein is Bifunctional protein FolD.